We begin with the raw amino-acid sequence, 300 residues long: Nucleotide-binding protein Daci_5422 (300 aa).

Residue 10–17 (GMSGSGKS) coordinates ATP. 59–62 (DARS) is a binding site for GTP.

The protein belongs to the RapZ-like family.

In terms of biological role, displays ATPase and GTPase activities. In Delftia acidovorans (strain DSM 14801 / SPH-1), this protein is Nucleotide-binding protein Daci_5422.